Here is a 364-residue protein sequence, read N- to C-terminus: Probable dual-specificity RNA methyltransferase RlmN (364 aa).

The active-site Proton acceptor is E107. The Radical SAM core domain occupies 113–346 (HEYGNSVCVT…ATIRREQGSD (234 aa)). The cysteines at positions 120 and 351 are disulfide-linked. [4Fe-4S] cluster contacts are provided by C127, C131, and C134. S-adenosyl-L-methionine is bound by residues 177–178 (GE), S209, 232–234 (SLH), and N308. C351 functions as the S-methylcysteine intermediate in the catalytic mechanism.

This sequence belongs to the radical SAM superfamily. RlmN family. It depends on [4Fe-4S] cluster as a cofactor.

It is found in the cytoplasm. It carries out the reaction adenosine(2503) in 23S rRNA + 2 reduced [2Fe-2S]-[ferredoxin] + 2 S-adenosyl-L-methionine = 2-methyladenosine(2503) in 23S rRNA + 5'-deoxyadenosine + L-methionine + 2 oxidized [2Fe-2S]-[ferredoxin] + S-adenosyl-L-homocysteine. The enzyme catalyses adenosine(37) in tRNA + 2 reduced [2Fe-2S]-[ferredoxin] + 2 S-adenosyl-L-methionine = 2-methyladenosine(37) in tRNA + 5'-deoxyadenosine + L-methionine + 2 oxidized [2Fe-2S]-[ferredoxin] + S-adenosyl-L-homocysteine. Specifically methylates position 2 of adenine 2503 in 23S rRNA and position 2 of adenine 37 in tRNAs. Confers resistance to some classes of antibiotics. The sequence is that of Probable dual-specificity RNA methyltransferase RlmN from Staphylococcus epidermidis (strain ATCC 12228 / FDA PCI 1200).